Consider the following 358-residue polypeptide: Short chain dehydrogenase sor7 (358 aa).

Positions 1 to 22 are disordered; it reads MSSPAIGQPPIPPTPTDANISG. Residues L34, D88, N115, Y206, K210, V238, and T240 each coordinate NADP(+). Y206 acts as the Proton donor in catalysis. K210 (lowers pKa of active site Tyr) is an active-site residue.

Belongs to the short-chain dehydrogenases/reductases (SDR) family.

The protein operates within secondary metabolite biosynthesis. Functionally, short chain dehydrogenase; part of the SOR gene cluster that mediates the biosynthesis of sorbicillinoids, a diverse group of yellow secondary metabolites that restrict growth of competing pathogenic fungi but not of bacteria. Sorbicillinoids biosynthesis requires the action of two PKSs. The SOR cluster is required for the production of trichodimerol and dihydrotrichotetronin, with sor2 being sufficient for production of trichodimerol, but not dihydrotrichotetronin in the light. Sor1 iteratively combines three acetyl units and the growing chain is modified by the ketoacyl reductase subunit, and optional by the enoyl reductase subunit in the second cycle. The polyketide is then handed over to the PKS sor2, which adds three more acetyl units, and two methyl groups. Sor2 releases an aldehyde, which undergoes spontaneous cyclization resulting in the formation of sorbicillin or 2',3'-dihydrosorbicillin. The monooxygenase sor5 oxidizes sorbicillin and 2',3'-dihydrosorbicillin to 2',3'-dihydrosorbicillinol and sorbicillinol, respectively. The oxidoreductase sor8 further converts sorbicillinol into oxosorbicillinol. Sorbicillinol is the building block for the other sorbicillinoids such as disorbicillinol, bisvertinolon, dihydrobisvertinolone, and dihydrotrichotetronine. The sequence is that of Short chain dehydrogenase sor7 from Hypocrea jecorina (strain QM6a) (Trichoderma reesei).